Here is a 783-residue protein sequence, read N- to C-terminus: Polyribonucleotide nucleotidyltransferase 1, mitochondrial (783 aa).

A mitochondrion-targeting transit peptide spans 1-45; the sequence is MAACRYCCSCLRLRPLSDGPFLLPRRDRALTQLQVRALWSSAGSR. Lysine 250, lysine 264, lysine 285, and lysine 289 each carry N6-acetyllysine. Lysine 552 is modified (N6-succinyllysine). The region spanning 605-664 is the KH domain; that stretch reads PVVETVQVPLSKRAKFVGPGGYNLKKLQAETGVTISQVDEETFSVFAPTPSAMHEARDFI. The S1 motif domain maps to 679–750; that stretch reads GAVYTATITE…ADGRMRLSRK (72 aa). Phosphoserine is present on residues serine 754 and serine 782.

This sequence belongs to the polyribonucleotide nucleotidyltransferase family. As to quaternary structure, homotrimer; in free form. Homooligomer. Component of the mitochondrial degradosome (mtEXO) complex which is a heteropentamer containing 2 copies of SUPV3L1 and 3 copies of PNPT1. As part of the mitochondrial degradosome complex, interacts with GRSF1 in an RNA-dependent manner; the interaction enhances the activity of the complex. Interacts with TCL1A; the interaction has no effect on PNPT1 exonuclease activity.

Its subcellular location is the cytoplasm. It is found in the mitochondrion matrix. It localises to the mitochondrion intermembrane space. It carries out the reaction RNA(n+1) + phosphate = RNA(n) + a ribonucleoside 5'-diphosphate. RNA-binding protein implicated in numerous RNA metabolic processes. Catalyzes the phosphorolysis of single-stranded polyribonucleotides processively in the 3'-to-5' direction. Mitochondrial intermembrane factor with RNA-processing exoribonulease activity. Component of the mitochondrial degradosome (mtEXO) complex, that degrades 3' overhang double-stranded RNA with a 3'-to-5' directionality in an ATP-dependent manner. Involved in the degradation of non-coding mitochondrial transcripts (MT-ncRNA) and tRNA-like molecules. Required for correct processing and polyadenylation of mitochondrial mRNAs. Plays a role as a cytoplasmic RNA import factor that mediates the translocation of small RNA components, like the 5S RNA, the RNA subunit of ribonuclease P and the mitochondrial RNA-processing (MRP) RNA, into the mitochondrial matrix. Plays a role in mitochondrial morphogenesis and respiration; regulates the expression of the electron transport chain (ETC) components at the mRNA and protein levels. In the cytoplasm, shows a 3'-to-5' exoribonuclease mediating mRNA degradation activity; degrades c-myc mRNA upon treatment with IFNB1/IFN-beta, resulting in a growth arrest in melanoma cells. Regulates the stability of specific mature miRNAs in melanoma cells; specifically and selectively degrades miR-221, preferentially. Also plays a role in RNA cell surveillance by cleaning up oxidized RNAs. Binds to the RNA subunit of ribonuclease P, MRP RNA and miR-221 microRNA. This chain is Polyribonucleotide nucleotidyltransferase 1, mitochondrial, found in Homo sapiens (Human).